Reading from the N-terminus, the 349-residue chain is Acyl-CoA:acyl-CoA alkyltransferase (349 aa).

Residue Glu-97 is the Proton acceptor of the active site. Residue Cys-123 is the Acyl-thioester intermediate of the active site.

Belongs to the thiolase-like superfamily. OleA family.

The enzyme catalyses a 1,2-saturated acyl-CoA + an acyl-CoA + H2O = an (R)-2-alkyl-3-oxoalkanoate + 2 CoA + H(+). Involved in olefin biosynthesis. Catalyzes a non-decarboxylative head-to-head Claisen condensation of two acyl-CoA molecules, generating an (R)-2-alkyl-3-oxoalkanoate. The S.oneidensis oleABCD genes produce 3,6,9,12,15,19,22,25,28-hentriacontanonaene, which may aid the cells in adapting to a sudden drop in temperature. This Shewanella oneidensis (strain ATCC 700550 / JCM 31522 / CIP 106686 / LMG 19005 / NCIMB 14063 / MR-1) protein is Acyl-CoA:acyl-CoA alkyltransferase.